Consider the following 228-residue polypeptide: Ribosomal RNA small subunit methyltransferase G (228 aa).

S-adenosyl-L-methionine is bound by residues Gly-70, Leu-75, Ala-120 to Glu-121, and Arg-138. Positions Arg-207–Ala-228 are disordered.

Belongs to the methyltransferase superfamily. RNA methyltransferase RsmG family.

It is found in the cytoplasm. Its function is as follows. Specifically methylates the N7 position of guanine in position 518 of 16S rRNA. This Mycobacterium marinum (strain ATCC BAA-535 / M) protein is Ribosomal RNA small subunit methyltransferase G.